A 503-amino-acid chain; its full sequence is 60S ribosomal export protein NMD3 (503 aa).

At Met-1 the chain carries N-acetylmethionine. Ser-258 carries the phosphoserine modification. Residues 405-422 carry the Nuclear and nucleolar localization signal motif; sequence KKSYDRTKRQRRRNWKLK. The segment at 425–503 is necessary for the nuclear export of the 60S ribosomal subunit; it reads ARERENMDTD…TGEEGASMLT (79 aa). Thr-433 carries the post-translational modification Phosphothreonine. The residue at position 468 (Ser-468) is a Phosphoserine. Residue Thr-470 is modified to Phosphothreonine. The Nuclear export signal signature appears at 480-489; the sequence is LAEMLEDLHI.

It belongs to the NMD3 family. As to quaternary structure, found in a 60S ribosomal subunit export complex with RAN and XPO1. Interacts with XPO1. Associates with pre-60S ribosomal particles.

The protein localises to the cytoplasm. The protein resides in the nucleus. In terms of biological role, acts as an adapter for the XPO1/CRM1-mediated export of the 60S ribosomal subunit. The protein is 60S ribosomal export protein NMD3 (NMD3) of Homo sapiens (Human).